The following is a 330-amino-acid chain: Serine/threonine-protein phosphatase PP1-alpha catalytic subunit (330 aa).

Ser-2 is subject to N-acetylserine. Phosphoserine is present on residues Ser-2 and Ser-22. Asp-64, His-66, Asp-92, and Asn-124 together coordinate Mn(2+). The active-site Proton donor is the His-125. Mn(2+) contacts are provided by His-173 and His-248. An N6-acetyllysine modification is found at Lys-305. Tyr-306 bears the Phosphotyrosine mark. The tract at residues 306–330 (YGQFSGLNPGGRPITPPRNSAKAKK) is disordered. At Thr-320 the chain carries Phosphothreonine. At Ser-325 the chain carries Phosphoserine.

It belongs to the PPP phosphatase family. PP-1 subfamily. PP1 comprises a catalytic subunit, PPP1CA, PPP1CB or PPP1CC, which is folded into its native form by inhibitor 2 and glycogen synthetase kinase 3, and then complexed to one or several targeting or regulatory subunits. PPP1R12A, PPP1R12B and PPP1R12C mediate binding to myosin. PPP1R3A (in skeletal muscle), PPP1R3B (in liver), PPP1R3C, PPP1R3D and PPP1R3F (in brain) mediate binding to glycogen. Interacts with PPP1R39. Interacts with BTBD10. Interacts with KCTD20. Interacts with PPP1R9A and PPP1R9B. Part of a complex containing PPP1R15B, PP1 and NCK1/2. Interacts with PHACTR4; which acts as an activator of PP1 activity. Interacts with PPP1R15A and PPP1R15B; the interactions mediate binding to EIF2S1. Interacts with PPP1R7. Interacts with YLPM1. Forms a complex with ILF2, ILF3, YLPM1, KHDRBS1, RBMX and NCOA5. Interacts with NOM1 and PPP1R8. Interacts with PPP1R16B. Interacts with RPSA only in the presence of PPP1R16B. Component of the PNUTS-PP1 phosphatase complex, composed of PPP1R10/PNUTS, TOX4, WDR82, and PPP1CA or PPP1CB or PPP1CC. Interacts with PPP1R10/PNUTS and PPP1R8. Interacts with WDR82 in the presence of PPP1R10/PNUTS. Interacts with TRIM28; the interaction dephosphorylates TRIM28 on 'Ser-824' and forms a complex at the p21 promoter site. Interacts with isoform 1 and isoform 4 of NEK2. Interacts with FER; this promotes phosphorylation at Thr-320. Interacts with DAB2; the interaction is mutually exclusive with the AXIN1:PPP1CA interaction. Interacts with FOXP3. Interacts with CENPA. Interacts with ATG16L1. Found in a complex with PPP1CA, PPP1CC, SHC1 and PEAK1. Interacts with tensin TNS1. Interacts with SAXO4, PPP1R21, PPP1R26, PPP1R27, PPP1R35, PPP1R36, PPP1R37, SH3RF2, ELFN1 and ELFN2. Interacts with TPRN; the interaction results in inhibition of PPC1A phosphatase activity. Interacts with SKA1 (via C-terminus); the interaction is direct and required for the recruitment of PP1 to the kinetochore. Interacts with the KNL1 complex subunit KNL1; the interaction is direct and mutually exclusive with KNL1 binding to microtubules. Component of the SHOC2-MRAS-PP1c (SMP) complex consisting of SHOC2, GTP-bound M-Ras/MRAS and the catalytic subunit of protein phosphatase 1 (either PPP1CA, PPP1CB or PPP1CC). SHOC2 and PP1c preferably bind M-Ras/MRAS, but they also bind K-Ras/KRAS, N-Ras/NRAS and H-Ras/HRAS; these interactions are GTP-dependent and both SHOC2 and PP1c are required to form a stable complex. Interacts with SHOC2 in the absence of Ras GTPases. In terms of assembly, (Microbial infection) Interacts with HHV-1 ICP34.5. As to quaternary structure, (Microbial infection) Interacts with Venezuelan equine encephalitis virus (VEEV) capsid protein; this interaction dephosphorylates the capsid protein, which increases its ability to bind to the viral genome. Requires Fe cation as cofactor. It depends on Mn(2+) as a cofactor. In terms of processing, phosphorylated. Dephosphorylated at Thr-320 in the presence of ionizing radiation.

It localises to the cytoplasm. Its subcellular location is the nucleus. It is found in the nucleoplasm. The protein localises to the nucleolus. The enzyme catalyses O-phospho-L-seryl-[protein] + H2O = L-seryl-[protein] + phosphate. The catalysed reaction is O-phospho-L-threonyl-[protein] + H2O = L-threonyl-[protein] + phosphate. The phosphatase activity of the PPP1R15A-PP1 complex toward EIF2S1 is specifically inhibited by Salubrinal, a drug that protects cells from endoplasmic reticulum stress. Its function is as follows. Protein phosphatase that associates with over 200 regulatory proteins to form highly specific holoenzymes which dephosphorylate hundreds of biological targets. Protein phosphatase 1 (PP1) is essential for cell division, transcription elongation, and participates in the regulation of glycogen metabolism, muscle contractility and protein synthesis. Involved in regulation of ionic conductances and long-term synaptic plasticity. May play an important role in dephosphorylating substrates such as the postsynaptic density-associated Ca(2+)/calmodulin dependent protein kinase II. Catalytic component of the PNUTS-PP1 protein phosphatase complex, a protein phosphatase 1 (PP1) complex that promotes RNA polymerase II transcription pause-release, allowing transcription elongation: the PNUTS-PP1 complex mediates the release of RNA polymerase II from promoter-proximal region of genes by catalyzing dephosphorylation of proteins involved in transcription, such as AFF4, CDK9, MEPCE, INTS12, NCBP1, POLR2M/GDOWN1 and SUPT6H. The PNUTS-PP1 complex also regulates transcription termination by mediating dephosphorylation of SUPT5H in termination zones downstream of poly(A) sites, thereby promoting deceleration of RNA polymerase II transcription. PNUTS-PP1 complex is also involved in the response to replication stress by mediating dephosphorylation of POLR2A at 'Ser-5' of the CTD, promoting RNA polymerase II degradation. PNUTS-PP1 also plays a role in the control of chromatin structure and cell cycle progression during the transition from mitosis into interphase. Regulates NEK2 function in terms of kinase activity and centrosome number and splitting, both in the presence and absence of radiation-induced DNA damage. Regulator of neural tube and optic fissure closure, and enteric neural crest cell (ENCCs) migration during development. In balance with CSNK1D and CSNK1E, determines the circadian period length, through the regulation of the speed and rhythmicity of PER1 and PER2 phosphorylation. May dephosphorylate CSNK1D and CSNK1E. Dephosphorylates the 'Ser-418' residue of FOXP3 in regulatory T-cells (Treg) from patients with rheumatoid arthritis, thereby inactivating FOXP3 and rendering Treg cells functionally defective. Dephosphorylates CENPA. Dephosphorylates the 'Ser-139' residue of ATG16L1 causing dissociation of ATG12-ATG5-ATG16L1 complex, thereby inhibiting autophagy. Together with PPP1CC (PP1-gamma subunit), dephosphorylates IFIH1/MDA5 and RIG-I leading to their activation and a functional innate immune response. Core component of the SHOC2-MRAS-PP1c (SMP) holophosphatase complex that regulates the MAPK pathway activation. The SMP complex specifically dephosphorylates the inhibitory phosphorylation at 'Ser-259' of RAF1 kinase, 'Ser-365' of BRAF kinase and 'Ser-214' of ARAF kinase, stimulating their kinase activities. The SMP complex enhances the dephosphorylation activity and substrate specificity of PP1c. (Microbial infection) Necessary for alphaviruses replication. The polypeptide is Serine/threonine-protein phosphatase PP1-alpha catalytic subunit (PPP1CA) (Homo sapiens (Human)).